We begin with the raw amino-acid sequence, 461 residues long: D-phenylhydantoinase (461 aa).

Residues H59, H61, and K151 each coordinate a divalent metal cation. Position 151 is an N6-carboxylysine (K151). Y156 contacts substrate. The a divalent metal cation site is built by H182 and H239. S286 contributes to the substrate binding site. D313 contributes to the a divalent metal cation binding site. Substrate is bound at residue N335.

It belongs to the metallo-dependent hydrolases superfamily. Hydantoinase/dihydropyrimidinase family. In terms of assembly, homotetramer. Requires a divalent metal cation as cofactor. Carboxylation allows a single lysine to coordinate two divalent metal cations.

The catalysed reaction is D-5-phenylhydantoin + H2O = N-carbamoyl-D-phenylglycine + H(+). In terms of biological role, catalyzes the stereospecific hydrolysis of the cyclic amide bond of D-hydantoin derivatives with an aromatic side chains at the 5'-position. Has no activity on dihydropyrimidines. The physiological function is unknown. In Escherichia coli O7:K1 (strain IAI39 / ExPEC), this protein is D-phenylhydantoinase.